A 179-amino-acid chain; its full sequence is RNA pyrophosphohydrolase (179 aa).

The 144-residue stretch at G6 to K149 folds into the Nudix hydrolase domain. The short motif at G38–G59 is the Nudix box element.

It belongs to the Nudix hydrolase family. RppH subfamily. A divalent metal cation serves as cofactor.

In terms of biological role, accelerates the degradation of transcripts by removing pyrophosphate from the 5'-end of triphosphorylated RNA, leading to a more labile monophosphorylated state that can stimulate subsequent ribonuclease cleavage. In Ruthia magnifica subsp. Calyptogena magnifica, this protein is RNA pyrophosphohydrolase.